The chain runs to 540 residues: tRNA-2-methylthio-N(6)-dimethylallyladenosine synthase (540 aa).

Residues 4–120 (RSYEVRTFGC…LPVLLERARH (117 aa)) form the MTTase N-terminal domain. [4Fe-4S] cluster-binding residues include C13, C49, C83, C157, C161, and C164. Positions 143-374 (RASHHSAWVS…ALQDEISWAE (232 aa)) constitute a Radical SAM core domain. The region spanning 376–468 (RALVGRRVEV…PHHLTADGPL (93 aa)) is the TRAM domain. Positions 480-540 (WALGRDGDGG…ADACCTPVRR (61 aa)) are disordered. Composition is skewed to low complexity over residues 492–502 (AAAQQPADGRP) and 520–533 (GPAS…GADA).

This sequence belongs to the methylthiotransferase family. MiaB subfamily. In terms of assembly, monomer. The cofactor is [4Fe-4S] cluster.

It is found in the cytoplasm. The catalysed reaction is N(6)-dimethylallyladenosine(37) in tRNA + (sulfur carrier)-SH + AH2 + 2 S-adenosyl-L-methionine = 2-methylsulfanyl-N(6)-dimethylallyladenosine(37) in tRNA + (sulfur carrier)-H + 5'-deoxyadenosine + L-methionine + A + S-adenosyl-L-homocysteine + 2 H(+). Functionally, catalyzes the methylthiolation of N6-(dimethylallyl)adenosine (i(6)A), leading to the formation of 2-methylthio-N6-(dimethylallyl)adenosine (ms(2)i(6)A) at position 37 in tRNAs that read codons beginning with uridine. This is tRNA-2-methylthio-N(6)-dimethylallyladenosine synthase from Frankia casuarinae (strain DSM 45818 / CECT 9043 / HFP020203 / CcI3).